The following is a 313-amino-acid chain: Ribosomal RNA small subunit methyltransferase H (313 aa).

S-adenosyl-L-methionine-binding positions include 36-38 (GGH), D56, F80, D102, and Q109.

It belongs to the methyltransferase superfamily. RsmH family.

The protein resides in the cytoplasm. It carries out the reaction cytidine(1402) in 16S rRNA + S-adenosyl-L-methionine = N(4)-methylcytidine(1402) in 16S rRNA + S-adenosyl-L-homocysteine + H(+). In terms of biological role, specifically methylates the N4 position of cytidine in position 1402 (C1402) of 16S rRNA. This is Ribosomal RNA small subunit methyltransferase H from Actinobacillus pleuropneumoniae serotype 7 (strain AP76).